Consider the following 210-residue polypeptide: N-(5'-phosphoribosyl)anthranilate isomerase (210 aa).

It belongs to the TrpF family.

The enzyme catalyses N-(5-phospho-beta-D-ribosyl)anthranilate = 1-(2-carboxyphenylamino)-1-deoxy-D-ribulose 5-phosphate. It participates in amino-acid biosynthesis; L-tryptophan biosynthesis; L-tryptophan from chorismate: step 3/5. This chain is N-(5'-phosphoribosyl)anthranilate isomerase, found in Staphylococcus aureus (strain MRSA252).